The primary structure comprises 561 residues: DNA ligase B (561 aa).

K125 functions as the N6-AMP-lysine intermediate in the catalytic mechanism.

The protein belongs to the NAD-dependent DNA ligase family. LigB subfamily.

It catalyses the reaction NAD(+) + (deoxyribonucleotide)n-3'-hydroxyl + 5'-phospho-(deoxyribonucleotide)m = (deoxyribonucleotide)n+m + AMP + beta-nicotinamide D-nucleotide.. In terms of biological role, catalyzes the formation of phosphodiester linkages between 5'-phosphoryl and 3'-hydroxyl groups in double-stranded DNA using NAD as a coenzyme and as the energy source for the reaction. The protein is DNA ligase B of Salmonella schwarzengrund (strain CVM19633).